The sequence spans 194 residues: 7-methyl-GTP pyrophosphatase (194 aa).

Asp69 serves as the catalytic Proton acceptor.

Belongs to the Maf family. YceF subfamily. A divalent metal cation is required as a cofactor.

Its subcellular location is the cytoplasm. The enzyme catalyses N(7)-methyl-GTP + H2O = N(7)-methyl-GMP + diphosphate + H(+). Nucleoside triphosphate pyrophosphatase that hydrolyzes 7-methyl-GTP (m(7)GTP). May have a dual role in cell division arrest and in preventing the incorporation of modified nucleotides into cellular nucleic acids. The polypeptide is 7-methyl-GTP pyrophosphatase (yceF) (Shigella flexneri).